The following is a 616-amino-acid chain: Dihydroxy-acid dehydratase 1 (616 aa).

Mg(2+) is bound at residue aspartate 81. Cysteine 122 provides a ligand contact to [2Fe-2S] cluster. Residues aspartate 123 and lysine 124 each coordinate Mg(2+). Residue lysine 124 is modified to N6-carboxylysine. A [2Fe-2S] cluster-binding site is contributed by cysteine 195. Glutamate 491 provides a ligand contact to Mg(2+). Serine 517 acts as the Proton acceptor in catalysis.

Belongs to the IlvD/Edd family. In terms of assembly, homodimer. The cofactor is [2Fe-2S] cluster. Mg(2+) is required as a cofactor.

The enzyme catalyses (2R)-2,3-dihydroxy-3-methylbutanoate = 3-methyl-2-oxobutanoate + H2O. The catalysed reaction is (2R,3R)-2,3-dihydroxy-3-methylpentanoate = (S)-3-methyl-2-oxopentanoate + H2O. It participates in amino-acid biosynthesis; L-isoleucine biosynthesis; L-isoleucine from 2-oxobutanoate: step 3/4. It functions in the pathway amino-acid biosynthesis; L-valine biosynthesis; L-valine from pyruvate: step 3/4. Its function is as follows. Functions in the biosynthesis of branched-chain amino acids. Catalyzes the dehydration of (2R,3R)-2,3-dihydroxy-3-methylpentanoate (2,3-dihydroxy-3-methylvalerate) into 2-oxo-3-methylpentanoate (2-oxo-3-methylvalerate) and of (2R)-2,3-dihydroxy-3-methylbutanoate (2,3-dihydroxyisovalerate) into 2-oxo-3-methylbutanoate (2-oxoisovalerate), the penultimate precursor to L-isoleucine and L-valine, respectively. The protein is Dihydroxy-acid dehydratase 1 of Bradyrhizobium diazoefficiens (strain JCM 10833 / BCRC 13528 / IAM 13628 / NBRC 14792 / USDA 110).